The sequence spans 436 residues: GTPase Der (436 aa).

EngA-type G domains lie at 4–167 and 176–351; these read PVVA…PKEE and VKFS…DNHS. Residues 10-17, 57-61, 119-122, 182-189, 229-233, and 294-297 each bind GTP; these read GRPNVGKS, DTGGI, NKVD, DTAGM, and NKWD. One can recognise a KH-like domain in the interval 352–436; it reads LRVQSSMLND…PIRVIARKRK (85 aa).

Belongs to the TRAFAC class TrmE-Era-EngA-EngB-Septin-like GTPase superfamily. EngA (Der) GTPase family. Associates with the 50S ribosomal subunit.

Functionally, GTPase that plays an essential role in the late steps of ribosome biogenesis. This is GTPase Der from Listeria welshimeri serovar 6b (strain ATCC 35897 / DSM 20650 / CCUG 15529 / CIP 8149 / NCTC 11857 / SLCC 5334 / V8).